A 461-amino-acid polypeptide reads, in one-letter code: Photosystem II CP43 reaction center protein (461 aa).

The propeptide occupies 1 to 2; it reads ME. At T3 the chain carries N-acetylthreonine. The residue at position 3 (T3) is a Phosphothreonine. 5 helical membrane-spanning segments follow: residues 57-81, 122-143, 166-188, 243-263, and 279-300; these read LFEV…PHLA, LIGP…KDKN, KALY…RIIT, QPWA…LSYS, and WFNN…ASQS. Residue E355 coordinates [CaMn4O5] cluster. A helical membrane pass occupies residues 435–459; sequence RARAAAAGFEKGIDRFNEPTLSLRP.

It belongs to the PsbB/PsbC family. PsbC subfamily. In terms of assembly, PSII is composed of 1 copy each of membrane proteins PsbA, PsbB, PsbC, PsbD, PsbE, PsbF, PsbH, PsbI, PsbJ, PsbK, PsbL, PsbM, PsbT, PsbX, PsbY, PsbZ, Psb30/Ycf12, at least 3 peripheral proteins of the oxygen-evolving complex and a large number of cofactors. It forms dimeric complexes. Binds multiple chlorophylls and provides some of the ligands for the Ca-4Mn-5O cluster of the oxygen-evolving complex. It may also provide a ligand for a Cl- that is required for oxygen evolution. PSII binds additional chlorophylls, carotenoids and specific lipids. serves as cofactor.

It is found in the plastid. The protein localises to the chloroplast thylakoid membrane. Its function is as follows. One of the components of the core complex of photosystem II (PSII). It binds chlorophyll and helps catalyze the primary light-induced photochemical processes of PSII. PSII is a light-driven water:plastoquinone oxidoreductase, using light energy to abstract electrons from H(2)O, generating O(2) and a proton gradient subsequently used for ATP formation. The protein is Photosystem II CP43 reaction center protein of Oedogonium cardiacum (Filamentous green alga).